The sequence spans 863 residues: MICAL-like protein 1 (863 aa).

A Calponin-homology (CH) domain is found at 2–108 (AGPRGALLAW…YVSQYYNHFC (107 aa)). 2 disordered regions span residues 119–162 (RKGL…TPSS) and 224–670 (GTRS…PLIK). Pro residues predominate over residues 125 to 135 (CSPPSVAPTPV). Low complexity-rich tracts occupy residues 143 to 159 (GEELSSGSLSEQGTGQT) and 224 to 244 (GTRSGTRPGPFSQPKQQHQQQ). One can recognise an LIM zinc-binding domain in the interval 162 to 225 (STCAACQQHV…EHCARLGPGT (64 aa)). Phosphoserine is present on residues S295 and S309. A Phosphothreonine modification is found at T318. Positions 325-340 (LQQENLVEQAGSSSLV) are enriched in polar residues. The segment covering 384–395 (APLPPSSSPGPP) has biased composition (pro residues). The residue at position 391 (S391) is a Phosphoserine. The short motif at 425-427 (NPF) is the NPF1 element. Acidic residues predominate over residues 427–438 (FEEEEEDKEEEA). A compositionally biased stretch (low complexity) spans 439–450 (PAAPSLATSPAL). T467 and T469 each carry phosphothreonine. 4 positions are modified to phosphoserine: S470, S471, S484, and S486. Composition is skewed to low complexity over residues 482–495 (APSASPLALHASRL), 505–520 (PSPALSVESLSSESAS), and 553–566 (SLSTNSSLASSGEL). S578 and S621 each carry phosphoserine. The short motif at 633–635 (NPF) is the NPF2 element. A compositionally biased stretch (low complexity) spans 638–656 (KPSPAASPATKKATKGSKP). Positions 652–863 (KGSKPVRPPA…AKSKSPRDKS (212 aa)) are mediates the interaction with RAB13 and RAB35 and intramolecular interaction with the CH domain. The bMERB domain occupies 671 to 818 (RKVQADQYIP…EEEEDKMLEA (148 aa)). Residues 682–711 (EDIHGEMDTIERRLDALEHRGVLLEEKLRG) adopt a coiled-coil conformation. The interval 700 to 863 (HRGVLLEEKL…AKSKSPRDKS (164 aa)) is necessary and sufficient to associate with tubular recycling endosome membranes, mediate phosphatidic acid-binding and membrane tubulation. At S740 the chain carries Phosphoserine. A coiled-coil region spans residues 785-830 (MQELVTLIEQRNAIINCLDEDRQREEEEDKMLEAMIKKKEFQREAE).

As to quaternary structure, homooligomer. Interacts (via NPF1 motif) with EHD1 (via EH domain); the interaction is direct and probably recruits EHD1 to membranes. Interacts with EHD3 (via EH domain). Interacts with RAB35 (GTP-bound form); the interaction is direct and probably recruits MICALL1 to membranes. Interacts with ACAP2; the interaction is indirect through RAB35. Interacts with RAB8A (GTP-bound form); regulates RAB8A association with recycling endosomes. Interacts with RAB13 (GTP-bound form). Interacts with ARF6 (GTP-bound form). Interacts with PACSIN2 (via the SH3 domain). Interacts with DPYSL2.

It localises to the recycling endosome membrane. It is found in the late endosome membrane. The protein resides in the cell projection. The protein localises to the cilium membrane. Its subcellular location is the cytoplasm. It localises to the cytoskeleton. It is found in the microtubule organizing center. The protein resides in the centrosome. The protein localises to the centriole. Lipid-binding protein with higher affinity for phosphatidic acid, a lipid enriched in recycling endosome membranes. On endosome membranes, acts as a downstream effector of Rab proteins recruiting cytosolic proteins to regulate membrane tubulation. Involved in a late step of receptor-mediated endocytosis regulating for instance endocytosed-EGF receptor trafficking. Alternatively, regulates slow endocytic recycling of endocytosed proteins back to the plasma membrane. Also involved in cargo protein delivery to the plasma membrane. Plays a role in ciliogenesis coordination, recruits EHD1 to primary cilium where it is anchored to the centriole through interaction with tubulins. May indirectly play a role in neurite outgrowth. In Homo sapiens (Human), this protein is MICAL-like protein 1 (MICALL1).